The primary structure comprises 295 residues: Probable endonuclease 4 (295 aa).

Histidine 78, histidine 118, glutamate 154, aspartate 188, histidine 191, histidine 225, aspartate 238, histidine 240, and glutamate 270 together coordinate Zn(2+).

It belongs to the AP endonuclease 2 family. Zn(2+) serves as cofactor.

The catalysed reaction is Endonucleolytic cleavage to 5'-phosphooligonucleotide end-products.. In terms of biological role, endonuclease IV plays a role in DNA repair. It cleaves phosphodiester bonds at apurinic or apyrimidinic (AP) sites, generating a 3'-hydroxyl group and a 5'-terminal sugar phosphate. This Vibrio parahaemolyticus serotype O3:K6 (strain RIMD 2210633) protein is Probable endonuclease 4.